We begin with the raw amino-acid sequence, 67 residues long: MNTTELRQKDVDGLKAEVKELQKAHFGLRMQKATQQLTNTSTLRSTRRAIARAKTILAETIVKQGAK.

Belongs to the universal ribosomal protein uL29 family.

The chain is Large ribosomal subunit protein uL29 from Polaromonas naphthalenivorans (strain CJ2).